The primary structure comprises 507 residues: MDSQKEALQRIISTLANKSDEIQNFIDTLNHTLKGVQENSSNILSELDEEFDSLYSILDDVKESMISTIKQEQVRKSQELQSQLSQCNNALENSEELLEFATRSLDIKEPEEFSKAARQIKDRVTMASAFRLSLKPKVSDNMTHLMVDFSQERQMLQTLKFLPVPKAPEIDPVECLVADNSVTVAWRMPEEDNKIDHFIMEYRKTNFDGLPRVKDERCWEVIDNIKGTEYTLSGLKFDSKYMNFRVRACNKAVAGDYSDPVTLETRALNFSLDNSSSHLNLKVEDSCVEWDPTGGKGQESKIKGKENKGSVHVTSLKKHTSGTPSPKRTSVGSRPPAVRGSRDRFTGESYTVLGDTAIENGQHYWEVKAQKDCKSYSVGVAYKTLGKFDQLGKTNTSWCVHVNSWLQNTFAAKHNNKVKALDVPVPEKIGVFCDFDGGQLSFYDAHSKQLLYSFKTKFTQPVVPGFMVWCGGLSLSTGMQVPSAVRTLQKSENGMTGSTSSLNNVTQ.

A coiled-coil region spans residues 70–109; sequence KQEQVRKSQELQSQLSQCNNALENSEELLEFATRSLDIKE. The COS domain maps to 105 to 162; it reads LDIKEPEEFSKAARQIKDRVTMASAFRLSLKPKVSDNMTHLMVDFSQERQMLQTLKFL. A Fibronectin type-III domain is found at 164–268; sequence VPKAPEIDPV…DPVTLETRAL (105 aa). The 194-residue stretch at 291-484 folds into the B30.2/SPRY domain; it reads DPTGGKGQES…LSTGMQVPSA (194 aa). A disordered region spans residues 292–345; it reads PTGGKGQESKIKGKENKGSVHVTSLKKHTSGTPSPKRTSVGSRPPAVRGSRDRF. Basic and acidic residues predominate over residues 298–309; the sequence is QESKIKGKENKG. Over residues 321–332 the composition is skewed to polar residues; that stretch reads SGTPSPKRTSVG. Phosphoserine occurs at positions 498 and 501.

This is FSD1-like protein (Fsd1l) from Mus musculus (Mouse).